A 135-amino-acid chain; its full sequence is S-adenosylmethionine decarboxylase proenzyme (135 aa).

Residue Ser-64 is the Schiff-base intermediate with substrate; via pyruvic acid of the active site. Ser-64 is modified (pyruvic acid (Ser); by autocatalysis). Catalysis depends on His-69, which acts as the Proton acceptor; for processing activity. Cys-84 functions as the Proton donor; for catalytic activity in the catalytic mechanism.

Belongs to the prokaryotic AdoMetDC family. Type 1 subfamily. As to quaternary structure, heterotetramer of two alpha and two beta chains arranged as a dimer of alpha/beta heterodimers. Pyruvate serves as cofactor. Post-translationally, is synthesized initially as an inactive proenzyme. Formation of the active enzyme involves a self-maturation process in which the active site pyruvoyl group is generated from an internal serine residue via an autocatalytic post-translational modification. Two non-identical subunits are generated from the proenzyme in this reaction, and the pyruvate is formed at the N-terminus of the alpha chain, which is derived from the carboxyl end of the proenzyme. The post-translation cleavage follows an unusual pathway, termed non-hydrolytic serinolysis, in which the side chain hydroxyl group of the serine supplies its oxygen atom to form the C-terminus of the beta chain, while the remainder of the serine residue undergoes an oxidative deamination to produce ammonia and the pyruvoyl group blocking the N-terminus of the alpha chain.

It catalyses the reaction S-adenosyl-L-methionine + H(+) = S-adenosyl 3-(methylsulfanyl)propylamine + CO2. It participates in amine and polyamine biosynthesis; S-adenosylmethioninamine biosynthesis; S-adenosylmethioninamine from S-adenosyl-L-methionine: step 1/1. Catalyzes the decarboxylation of S-adenosylmethionine to S-adenosylmethioninamine (dcAdoMet), the propylamine donor required for the synthesis of the polyamines spermine and spermidine from the diamine putrescine. This Aquifex aeolicus (strain VF5) protein is S-adenosylmethionine decarboxylase proenzyme.